The following is a 464-amino-acid chain: MKIYNTMTRKKEEFVPVKPNEVQMYVCGPTVYNFFHIGNARTFIVFDTVRKYFEYRGYKVNFIQNFTDIDDKMIAKANNEGVSVKELGDRYIKEYYEDADGLNLERATCNPRATEYIGKIIDFVKGLQDEGYAYEIDGDVYFNTNAFKEYGKLSGQNLEDRMAGATIAVDDRKKSPADFALWKSEKPGEPSWESPWGKGRPGWHIECSCMARDLLGDTIDIHAGAIDLIFPHHENEIAQSEARTGKPFSKYWMHAAYLNINNEKMSKSLNNFLTARDILKEYDAEVIRLFLLSAHYRTPLNFTEESIEAAKTSLERLYNTINNLGSLLNNTAESNDDSEYLKALDSYREKFIEKMDDDFNTADGISVIFDLAKDINININGKSSKAAVEKAISLMRELGKPLGILQKVEKHNLEDEIQNLIEQRQNARKNKDWALADKIRDDLKERGIVLEDTPEGIRWKFIDK.

Residue Cys-27 coordinates Zn(2+). The short motif at 29 to 39 (PTVYNFFHIGN) is the 'HIGH' region element. 3 residues coordinate Zn(2+): Cys-207, His-232, and Glu-236. Residues 264–268 (KMSKS) carry the 'KMSKS' region motif. Lys-267 contributes to the ATP binding site.

This sequence belongs to the class-I aminoacyl-tRNA synthetase family. Monomer. The cofactor is Zn(2+).

It localises to the cytoplasm. It carries out the reaction tRNA(Cys) + L-cysteine + ATP = L-cysteinyl-tRNA(Cys) + AMP + diphosphate. The polypeptide is Cysteine--tRNA ligase (Clostridium acetobutylicum (strain ATCC 824 / DSM 792 / JCM 1419 / IAM 19013 / LMG 5710 / NBRC 13948 / NRRL B-527 / VKM B-1787 / 2291 / W)).